The following is a 69-amino-acid chain: Protein SlyX homolog (69 aa).

This sequence belongs to the SlyX family.

This is Protein SlyX homolog from Pseudomonas aeruginosa (strain LESB58).